Here is a 552-residue protein sequence, read N- to C-terminus: BAR/IMD domain-containing adapter protein 2 (552 aa).

Residues 1 to 250 (MSLSRSEEMH…VQLMQQVASN (250 aa)) enclose the IMD domain. The stretch at 132-153 (DALDKCQAELKKLRKKSQGSKN) forms a coiled coil. Ser-261 is modified (phosphoserine). Residues 295–369 (STPIMNGVTG…TLPRSSSMAA (75 aa)) form a disordered region. Position 296 is a phosphothreonine (Thr-296). Residues 320 to 334 (QPKSLSPPQSQSKLS) show a composition bias toward low complexity. Residues Ser-323, Ser-325, and Ser-336 each carry the phosphoserine modification. Thr-340 is subject to Phosphothreonine. Ser-346 carries the phosphoserine modification. The segment covering 348 to 367 (TPKNSYATTENKTLPRSSSM) has biased composition (polar residues). The residue at position 360 (Thr-360) is a Phosphothreonine. 4 positions are modified to phosphoserine: Ser-366, Ser-384, Ser-395, and Ser-454. The SH3 domain occupies 374–437 (NGRMRVKAIF…PFSYTRVLDS (64 aa)). Positions 447–457 (LQQGKSSSTGN) are enriched in polar residues. Disordered regions lie at residues 447–466 (LQQG…DLAI) and 525–552 (TNDR…LAGR).

Homodimer. Interacts with CDC42 and RAC1 that have been activated by GTP binding. Interacts with ATN1, ADGRB1, EPS8, SHANK1, SHANK2, SHANK3, WASF1 and WASF2. Interacts with ENAH after recruitment of CDC42. Interacts with TIAM1 and DIAPH1. Interacts (via SH3 domain) with E.coli effector protein EspF(U) (via PXXP motifs). Interacts with E.coli intimin receptor Tir. Phosphorylated on tyrosine residues by INSR in response to insulin treatment. Isoform 1 and isoform 4 are expressed almost exclusively in brain. Isoform 4 is barely detectable in placenta, prostate and testis. A short isoform is ubiquitous, with the highest expression in liver, prostate, testis and placenta.

The protein localises to the cytoplasm. It is found in the membrane. It localises to the cell projection. Its subcellular location is the filopodium. The protein resides in the ruffle. The protein localises to the cytoskeleton. Its function is as follows. Adapter protein that links membrane-bound small G-proteins to cytoplasmic effector proteins. Necessary for CDC42-mediated reorganization of the actin cytoskeleton and for RAC1-mediated membrane ruffling. Involved in the regulation of the actin cytoskeleton by WASF family members and the Arp2/3 complex. Plays a role in neurite growth. Acts syngeristically with ENAH to promote filipodia formation. Plays a role in the reorganization of the actin cytoskeleton in response to bacterial infection. Participates in actin bundling when associated with EPS8, promoting filopodial protrusions. This is BAR/IMD domain-containing adapter protein 2 (BAIAP2) from Homo sapiens (Human).